Reading from the N-terminus, the 173-residue chain is 3-isopropylmalate dehydratase small subunit (173 aa).

This sequence belongs to the LeuD family. LeuD type 2 subfamily. Heterodimer of LeuC and LeuD.

The catalysed reaction is (2R,3S)-3-isopropylmalate = (2S)-2-isopropylmalate. The protein operates within amino-acid biosynthesis; L-leucine biosynthesis; L-leucine from 3-methyl-2-oxobutanoate: step 2/4. Catalyzes the isomerization between 2-isopropylmalate and 3-isopropylmalate, via the formation of 2-isopropylmaleate. This chain is 3-isopropylmalate dehydratase small subunit, found in Caldicellulosiruptor saccharolyticus (strain ATCC 43494 / DSM 8903 / Tp8T 6331).